We begin with the raw amino-acid sequence, 510 residues long: 2,3-bisphosphoglycerate-independent phosphoglycerate mutase (510 aa).

2 residues coordinate Mn(2+): aspartate 12 and serine 62. Serine 62 functions as the Phosphoserine intermediate in the catalytic mechanism. Residues histidine 123, 153-154, arginine 185, arginine 191, 261-264, and lysine 336 contribute to the substrate site; these read RD and RPDR. Positions 403, 407, 444, 445, and 462 each coordinate Mn(2+).

It belongs to the BPG-independent phosphoglycerate mutase family. As to quaternary structure, monomer. Mn(2+) serves as cofactor.

The enzyme catalyses (2R)-2-phosphoglycerate = (2R)-3-phosphoglycerate. The protein operates within carbohydrate degradation; glycolysis; pyruvate from D-glyceraldehyde 3-phosphate: step 3/5. Essential for rapid growth and for sporulation. Catalyzes the interconversion of 2-phosphoglycerate and 3-phosphoglycerate. The polypeptide is 2,3-bisphosphoglycerate-independent phosphoglycerate mutase (Priestia megaterium (strain ATCC 12872 / QMB1551) (Bacillus megaterium)).